Consider the following 337-residue polypeptide: Holliday junction branch migration complex subunit RuvB (337 aa).

Residues 4-186 form a large ATPase domain (RuvB-L) region; that stretch reads ADRLIAADNP…FGIVQRLEYY (183 aa). ATP contacts are provided by residues Ile25, Arg26, Gly67, Lys70, Thr71, Thr72, 133-135, Arg176, Tyr186, and Arg223; that span reads EDY. Mg(2+) is bound at residue Thr71. A small ATPAse domain (RuvB-S) region spans residues 187-257; it reads KVDDLQYIVQ…IADKALNMLD (71 aa). Residues 260-337 form a head domain (RuvB-H) region; sequence VCGFDYMDRK…LHFGIDRPDK (78 aa). 2 residues coordinate DNA: Arg315 and Arg320.

It belongs to the RuvB family. Homohexamer. Forms an RuvA(8)-RuvB(12)-Holliday junction (HJ) complex. HJ DNA is sandwiched between 2 RuvA tetramers; dsDNA enters through RuvA and exits via RuvB. An RuvB hexamer assembles on each DNA strand where it exits the tetramer. Each RuvB hexamer is contacted by two RuvA subunits (via domain III) on 2 adjacent RuvB subunits; this complex drives branch migration. In the full resolvosome a probable DNA-RuvA(4)-RuvB(12)-RuvC(2) complex forms which resolves the HJ.

The protein resides in the cytoplasm. It catalyses the reaction ATP + H2O = ADP + phosphate + H(+). Its function is as follows. The RuvA-RuvB-RuvC complex processes Holliday junction (HJ) DNA during genetic recombination and DNA repair, while the RuvA-RuvB complex plays an important role in the rescue of blocked DNA replication forks via replication fork reversal (RFR). RuvA specifically binds to HJ cruciform DNA, conferring on it an open structure. The RuvB hexamer acts as an ATP-dependent pump, pulling dsDNA into and through the RuvAB complex. RuvB forms 2 homohexamers on either side of HJ DNA bound by 1 or 2 RuvA tetramers; 4 subunits per hexamer contact DNA at a time. Coordinated motions by a converter formed by DNA-disengaged RuvB subunits stimulates ATP hydrolysis and nucleotide exchange. Immobilization of the converter enables RuvB to convert the ATP-contained energy into a lever motion, pulling 2 nucleotides of DNA out of the RuvA tetramer per ATP hydrolyzed, thus driving DNA branch migration. The RuvB motors rotate together with the DNA substrate, which together with the progressing nucleotide cycle form the mechanistic basis for DNA recombination by continuous HJ branch migration. Branch migration allows RuvC to scan DNA until it finds its consensus sequence, where it cleaves and resolves cruciform DNA. The chain is Holliday junction branch migration complex subunit RuvB from Aliivibrio salmonicida (strain LFI1238) (Vibrio salmonicida (strain LFI1238)).